The chain runs to 445 residues: Methylenetetrahydrofolate--tRNA-(uracil-5-)-methyltransferase TrmFO (445 aa).

FAD is bound at residue 9-14 (GGGLAG).

Belongs to the MnmG family. TrmFO subfamily. FAD is required as a cofactor.

It is found in the cytoplasm. It catalyses the reaction uridine(54) in tRNA + (6R)-5,10-methylene-5,6,7,8-tetrahydrofolate + NADH + H(+) = 5-methyluridine(54) in tRNA + (6S)-5,6,7,8-tetrahydrofolate + NAD(+). It carries out the reaction uridine(54) in tRNA + (6R)-5,10-methylene-5,6,7,8-tetrahydrofolate + NADPH + H(+) = 5-methyluridine(54) in tRNA + (6S)-5,6,7,8-tetrahydrofolate + NADP(+). In terms of biological role, catalyzes the folate-dependent formation of 5-methyl-uridine at position 54 (M-5-U54) in all tRNAs. This is Methylenetetrahydrofolate--tRNA-(uracil-5-)-methyltransferase TrmFO from Aquifex aeolicus (strain VF5).